We begin with the raw amino-acid sequence, 464 residues long: Cysteine--tRNA ligase (464 aa).

Zn(2+) is bound at residue C29. A 'HIGH' region motif is present at residues 31–41 (PTVYDFAHIGN). The Zn(2+) site is built by C224, H249, and E253. A 'KMSKS' region motif is present at residues 282–286 (KMSKS). K285 is an ATP binding site.

The protein belongs to the class-I aminoacyl-tRNA synthetase family. Monomer. Zn(2+) is required as a cofactor.

It is found in the cytoplasm. The enzyme catalyses tRNA(Cys) + L-cysteine + ATP = L-cysteinyl-tRNA(Cys) + AMP + diphosphate. The sequence is that of Cysteine--tRNA ligase from Afipia carboxidovorans (strain ATCC 49405 / DSM 1227 / KCTC 32145 / OM5) (Oligotropha carboxidovorans).